A 677-amino-acid polypeptide reads, in one-letter code: WD repeat-containing protein 48 (677 aa).

Residue Y28 is modified to Phosphotyrosine. 8 WD repeats span residues 28 to 67 (YNRN…QDPY), 73 to 112 (HHTD…CMST), 115 to 154 (THKD…ALTA), 166 to 205 (GNKD…KLMK), 208 to 247 (GHTD…CIAT), 250 to 289 (VHDE…IRVL), 292 to 334 (EEKA…NFRA), and 358 to 397 (KGGA…KVED). Position 214 is an N6-acetyllysine (K214). Position 578 is an N6-acetyllysine (K578). Residues 607–628 (LDNESQTTSSSNNEKPGEQEKE) are disordered. Positions 609 to 620 (NESQTTSSSNNE) are enriched in low complexity. Residue T613 is modified to Phosphothreonine.

Belongs to the WD repeat WDR48 family. Interacts with USP46. Interacts with USP1. Interacts with USP12. Component of the USP12-WDR20-WDR48 deubiquitinating complex. Component of the USP12-DMWD-WDR48 deubiquitinating complex. Interacts with PHLPP1. Interacts with RAD51AP1; the interaction is direct and promotes formation of a trimeric complex with RAD51 via RAD51AP1. Interacts with ATAD5; the interaction regulates USP1-mediated PCNA deubiquitination. Interacts with RAD51; the interaction is enhanced under replication stress. Interacts with ITCH; the interaction is more efficient when both USP12 and WDR48/UAF1 are involved and may facilitate recruitment of the USP12 deubiquitinating complex to Notch. As to quaternary structure, (Microbial infection) Interacts with papillomavirus HPV11 E1 protein. In terms of assembly, (Microbial infection) Interacts with Saimiriine herpesvirus TIP protein. (Microbial infection) Interacts with human cytomegalovirus protein UL138. As to quaternary structure, (Microbial infection) Interacts with Epstein-Barr virus protein EBNA3. As to expression, ubiquitous.

The protein localises to the nucleus. Its subcellular location is the cytoplasm. It localises to the lysosome. The protein resides in the late endosome. Its function is as follows. Regulator of deubiquitinating complexes, which acts as a strong activator of USP1, USP12 and USP46. Enhances the USP1-mediated deubiquitination of FANCD2; USP1 being almost inactive by itself. Activates deubiquitination by increasing the catalytic turnover without increasing the affinity of deubiquitinating enzymes for the substrate. Also activates deubiquitinating activity of complexes containing USP12. In complex with USP12, acts as a potential tumor suppressor by positively regulating PHLPP1 stability. Docks at the distal end of the USP12 fingers domain and induces a cascade of structural changes leading to the activation of the enzyme. Together with RAD51AP1, promotes DNA repair by stimulating RAD51-mediated homologous recombination. Binds single-stranded DNA (ssDNA) and double-stranded DNA (dsDNA). DNA-binding is required both for USP1-mediated deubiquitination of FANCD2 and stimulation of RAD51-mediated homologous recombination: both WDR48/UAF1 and RAD51AP1 have coordinated role in DNA-binding during these processes. Together with ATAD5 and by regulating USP1 activity, has a role in PCNA-mediated translesion synthesis (TLS) by deubiquitinating monoubiquitinated PCNA. Together with ATAD5, has a role in recruiting RAD51 to stalled forks during replication stress. (Microbial infection) In case of infection by Herpesvirus saimiri, may play a role in vesicular transport or membrane fusion events necessary for transport to lysosomes. Induces lysosomal vesicle formation via interaction with Herpesvirus saimiri tyrosine kinase-interacting protein (TIP). Subsequently, TIP recruits tyrosine-protein kinase LCK, resulting in down-regulation of T-cell antigen receptor TCR. May play a role in generation of enlarged endosomal vesicles via interaction with TIP. In case of infection by papillomavirus HPV11, promotes the maintenance of the viral genome via its interaction with HPV11 helicase E1. This chain is WD repeat-containing protein 48, found in Homo sapiens (Human).